The sequence spans 427 residues: Hydroxylamine reductase (427 aa).

[4Fe-4S] cluster contacts are provided by Cys3, Cys6, Cys15, and Cys21. Residues His129, Glu153, Cys197, Cys283, Cys311, Cys336, Glu370, and Lys372 each contribute to the hybrid [4Fe-2O-2S] cluster site. Position 283 is a cysteine persulfide (Cys283).

Belongs to the HCP family. [4Fe-4S] cluster is required as a cofactor. Requires hybrid [4Fe-2O-2S] cluster as cofactor.

The protein localises to the cytoplasm. It catalyses the reaction A + NH4(+) + H2O = hydroxylamine + AH2 + H(+). Functionally, catalyzes the reduction of hydroxylamine to form NH(3) and H(2)O. The protein is Hydroxylamine reductase of Methanothermobacter thermautotrophicus (strain ATCC 29096 / DSM 1053 / JCM 10044 / NBRC 100330 / Delta H) (Methanobacterium thermoautotrophicum).